A 288-amino-acid chain; its full sequence is Acetyl-coenzyme A carboxylase carboxyl transferase subunit beta (288 aa).

One can recognise a CoA carboxyltransferase N-terminal domain in the interval 24 to 288 (LWVKCPESGE…TRTPRASEAA (265 aa)).

The protein belongs to the AccD/PCCB family. In terms of assembly, acetyl-CoA carboxylase is a heterohexamer composed of biotin carboxyl carrier protein (AccB), biotin carboxylase (AccC) and two subunits each of ACCase subunit alpha (AccA) and ACCase subunit beta (AccD).

It is found in the cytoplasm. It carries out the reaction N(6)-carboxybiotinyl-L-lysyl-[protein] + acetyl-CoA = N(6)-biotinyl-L-lysyl-[protein] + malonyl-CoA. It functions in the pathway lipid metabolism; malonyl-CoA biosynthesis; malonyl-CoA from acetyl-CoA: step 1/1. In terms of biological role, component of the acetyl coenzyme A carboxylase (ACC) complex. Biotin carboxylase (BC) catalyzes the carboxylation of biotin on its carrier protein (BCCP) and then the CO(2) group is transferred by the transcarboxylase to acetyl-CoA to form malonyl-CoA. This is Acetyl-coenzyme A carboxylase carboxyl transferase subunit beta from Methylocella silvestris (strain DSM 15510 / CIP 108128 / LMG 27833 / NCIMB 13906 / BL2).